The sequence spans 610 residues: Glutamine--fructose-6-phosphate aminotransferase [isomerizing] (610 aa).

Catalysis depends on Cys2, which acts as the Nucleophile; for GATase activity. A Glutamine amidotransferase type-2 domain is found at 2–218; it reads CGIVGAVAQR…EGDIAEITRR (217 aa). SIS domains follow at residues 278–426 and 459–600; these read IVDS…VKGH and LAED…VDQP. The active-site For Fru-6P isomerization activity is the Lys605.

In terms of assembly, homodimer.

The protein localises to the cytoplasm. It carries out the reaction D-fructose 6-phosphate + L-glutamine = D-glucosamine 6-phosphate + L-glutamate. In terms of biological role, catalyzes the first step in hexosamine metabolism, converting fructose-6P into glucosamine-6P using glutamine as a nitrogen source. This is Glutamine--fructose-6-phosphate aminotransferase [isomerizing] from Haemophilus influenzae (strain ATCC 51907 / DSM 11121 / KW20 / Rd).